The primary structure comprises 71 residues: MFSRNYNASQSQRDLKSQLEEINRQKQKITIDSQHFEKIKSVTKNVNELQNMEKRVMKSRQNFLNYGIDNF.

This is an uncharacterized protein from Autographa californica nuclear polyhedrosis virus (AcMNPV).